A 245-amino-acid polypeptide reads, in one-letter code: Probable transcriptional regulatory protein Cbei_4222 (245 aa).

The protein belongs to the TACO1 family.

The protein localises to the cytoplasm. The sequence is that of Probable transcriptional regulatory protein Cbei_4222 from Clostridium beijerinckii (strain ATCC 51743 / NCIMB 8052) (Clostridium acetobutylicum).